We begin with the raw amino-acid sequence, 365 residues long: Tubulin-like protein CetZ (365 aa).

Residues 10-14 (QCGTK), 103-105 (GTG), E136, N163, and N181 each bind GTP.

The protein belongs to the CetZ family.

It is found in the cytoplasm. Involved in cell shape control. The protein is Tubulin-like protein CetZ of Pyrococcus horikoshii (strain ATCC 700860 / DSM 12428 / JCM 9974 / NBRC 100139 / OT-3).